A 147-amino-acid chain; its full sequence is Large ribosomal subunit protein uL15 (147 aa).

The interval 1–55 (MKLDNLAPQPGAKKRKRRVGRGIAAGQGASCGFGMRGQKSRSGRPTRPGFEGGQM) is disordered. Gly residues predominate over residues 23–35 (IAAGQGASCGFGM).

It belongs to the universal ribosomal protein uL15 family. In terms of assembly, part of the 50S ribosomal subunit.

Binds to the 23S rRNA. The sequence is that of Large ribosomal subunit protein uL15 from Synechococcus elongatus (strain ATCC 33912 / PCC 7942 / FACHB-805) (Anacystis nidulans R2).